We begin with the raw amino-acid sequence, 2890 residues long: Bifunctional DNA-directed RNA polymerase subunit beta-beta' (2890 aa).

Positions 1 to 1377 (MSKKIPLKNR…DINIFGDEMD (1377 aa)) are DNA-directed RNA polymerase subunit beta. Residues 1384 to 2890 (PIVIKEDDRP…LRTIEDSPKI (1507 aa)) are DNA-directed RNA polymerase subunit beta'. Positions 1449, 1451, 1465, and 1468 each coordinate Zn(2+). Mg(2+) is bound by residues D1849, D1851, and D1853. C2179, C2253, C2260, and C2263 together coordinate Zn(2+).

This sequence in the N-terminal section; belongs to the RNA polymerase beta chain family. In the C-terminal section; belongs to the RNA polymerase beta' chain family. As to quaternary structure, the RNAP catalytic core consists of 2 alpha, 1 beta/beta' and 1 omega subunit. When a sigma factor is associated with the core the holoenzyme is formed, which can initiate transcription. Requires Mg(2+) as cofactor. Zn(2+) serves as cofactor.

The enzyme catalyses RNA(n) + a ribonucleoside 5'-triphosphate = RNA(n+1) + diphosphate. In terms of biological role, DNA-dependent RNA polymerase catalyzes the transcription of DNA into RNA using the four ribonucleoside triphosphates as substrates. The polypeptide is Bifunctional DNA-directed RNA polymerase subunit beta-beta' (rpoBC) (Helicobacter acinonychis (strain Sheeba)).